The following is an 88-amino-acid chain: MISKEQKQKIITEFGKNPNDTGSVEVQIALITDRIRYLTEHLKSNKKDHSSKRGLLKLVGQRRSLLRYYQKKNLEAYRTLIAKLGLRK.

The protein belongs to the universal ribosomal protein uS15 family. Part of the 30S ribosomal subunit. Forms a bridge to the 50S subunit in the 70S ribosome, contacting the 23S rRNA.

Functionally, one of the primary rRNA binding proteins, it binds directly to 16S rRNA where it helps nucleate assembly of the platform of the 30S subunit by binding and bridging several RNA helices of the 16S rRNA. In terms of biological role, forms an intersubunit bridge (bridge B4) with the 23S rRNA of the 50S subunit in the ribosome. In Borrelia hermsii (strain HS1 / DAH), this protein is Small ribosomal subunit protein uS15.